The following is a 159-amino-acid chain: U1 small nuclear ribonucleoprotein C (159 aa).

The Matrin-type zinc-finger motif lies at 4–36 (FYCDYCDTYLTHDSPSVRKTHCSGRKHKENVKD). Disordered stretches follow at residues 63 to 95 (PPTPFAAPPAGSAMIPPPPSLGGPPRPGMMPAP) and 139 to 159 (MRPPTRPMMLQSRPGMARPDR). Residues 77–95 (IPPPPSLGGPPRPGMMPAP) show a composition bias toward pro residues.

Belongs to the U1 small nuclear ribonucleoprotein C family. As to quaternary structure, component of the U1 snRNP. The U1 snRNP is composed of the U1 snRNA and the 7 core Sm proteins snrpb, snrpd1, snrpd2, snrpd3, snrpe, snrpf and snrpg that assemble in a heptameric protein ring on the Sm site of the small nuclear RNA to form the core snRNP, and at least 3 U1 snRNP-specific proteins snrnp70/U1-70K, snrpa/U1-A and snrpc/U1-C. snrpc/U1-C interacts with U1 snRNA and the 5' splice-site region of the pre-mRNA.

It is found in the nucleus. In terms of biological role, component of the spliceosomal U1 snRNP, which is essential for recognition of the pre-mRNA 5' splice-site and the subsequent assembly of the spliceosome. SNRPC/U1-C is directly involved in initial 5' splice-site recognition for both constitutive and regulated alternative splicing. The interaction with the 5' splice-site seems to precede base-pairing between the pre-mRNA and the U1 snRNA. Stimulates commitment or early (E) complex formation by stabilizing the base pairing of the 5' end of the U1 snRNA and the 5' splice-site region. The protein is U1 small nuclear ribonucleoprotein C of Xenopus laevis (African clawed frog).